The sequence spans 469 residues: Glutamate--tRNA ligase 1 (469 aa).

Positions 10 to 20 (PSPTGYLHVGG) match the 'HIGH' region motif. The 'KMSKS' region motif lies at 252 to 256 (KLSKR). K255 lines the ATP pocket.

This sequence belongs to the class-I aminoacyl-tRNA synthetase family. Glutamate--tRNA ligase type 1 subfamily. Monomer.

The protein resides in the cytoplasm. The catalysed reaction is tRNA(Glu) + L-glutamate + ATP = L-glutamyl-tRNA(Glu) + AMP + diphosphate. In terms of biological role, catalyzes the attachment of glutamate to tRNA(Glu) in a two-step reaction: glutamate is first activated by ATP to form Glu-AMP and then transferred to the acceptor end of tRNA(Glu). The protein is Glutamate--tRNA ligase 1 of Fervidobacterium nodosum (strain ATCC 35602 / DSM 5306 / Rt17-B1).